The following is a 352-amino-acid chain: Cuticle collagen dpy-17 (352 aa).

Positions 1–29 (MSVFAGYAACTLGAVSMLLCVSLVPQVYQ) are cleaved as a signal peptide. The furin-like endopeptidase recognition region stretch occupies residues 61 to 64 (RVRR). Disordered regions lie at residues 73-143 (GGYG…GPGD) and 156-352 (GPAG…GYRN). Residues 87-97 (GPHGGFPGGPQ) show a composition bias toward gly residues. 4 triple-helical region regions span residues 156–182 (GPAG…DGED), 202–264 (GPQG…DVEH), 267–290 (GLPG…QGDR), and 294–329 (GIAG…PGQD). A Collagen-like domain is found at 202–259 (GPQGPPGSQGKPGARGMRGARGQAAMPGRDGSPGMPGSLGPIGPPGAAGEEGPTGEPG). Residues 207-259 (PGSQGKPGARGMRGARGQAAMPGRDGSPGMPGSLGPIGPPGAAGEEGPTGEPG) are compositionally biased toward low complexity. Over residues 337 to 352 (QRNTNAAVSGNQGYRN) the composition is skewed to polar residues.

It belongs to the cuticular collagen family. Collagen polypeptide chains are complexed within the cuticle by disulfide bonds and other types of covalent cross-links.

It localises to the secreted. It is found in the extracellular space. Functionally, secreted collagen that forms part of the nematode cuticle, which functions as an exoskeleton and a barrier to protect the worm from its environment. Secretion and subsequent incorporation into the cuticle is likely mediated by bli-4, which probably cleaves at the N-terminal consensus furin cleavage site. This is Cuticle collagen dpy-17 from Caenorhabditis elegans.